Here is a 256-residue protein sequence, read N- to C-terminus: Type III pantothenate kinase (256 aa).

Residue 6–13 (DIGNTHIV) coordinates ATP. A substrate-binding site is contributed by 109–112 (GADR). Asp-111 acts as the Proton acceptor in catalysis. Asp-132 contacts K(+). Thr-135 is a binding site for ATP. Substrate is bound at residue Thr-186.

It belongs to the type III pantothenate kinase family. As to quaternary structure, homodimer. NH4(+) serves as cofactor. Requires K(+) as cofactor.

It localises to the cytoplasm. The catalysed reaction is (R)-pantothenate + ATP = (R)-4'-phosphopantothenate + ADP + H(+). The protein operates within cofactor biosynthesis; coenzyme A biosynthesis; CoA from (R)-pantothenate: step 1/5. In terms of biological role, catalyzes the phosphorylation of pantothenate (Pan), the first step in CoA biosynthesis. The chain is Type III pantothenate kinase from Fusobacterium nucleatum subsp. nucleatum (strain ATCC 25586 / DSM 15643 / BCRC 10681 / CIP 101130 / JCM 8532 / KCTC 2640 / LMG 13131 / VPI 4355).